The sequence spans 305 residues: Glycine--tRNA ligase alpha subunit (305 aa).

This sequence belongs to the class-II aminoacyl-tRNA synthetase family. In terms of assembly, tetramer of two alpha and two beta subunits.

The protein localises to the cytoplasm. The enzyme catalyses tRNA(Gly) + glycine + ATP = glycyl-tRNA(Gly) + AMP + diphosphate. The polypeptide is Glycine--tRNA ligase alpha subunit (Streptococcus sanguinis (strain SK36)).